The chain runs to 496 residues: Zinc finger and SCAN domain-containing protein 5C (496 aa).

A compositionally biased stretch (polar residues) spans 1–19 (MAANCTSSWSLGESCNSPG). A disordered region spans residues 1-38 (MAANCTSSWSLGESCNSPGSEPPQSMPSPATQLGNHDS). One can recognise an SCAN box domain in the interval 44-126 (HVNFRMFSCP…DLLRNNRRPK (83 aa)). 2 disordered regions span residues 149–188 (EAPA…TLPR) and 203–347 (PETT…HPSG). Residues 161–171 (VSSQRTSSVNQ) show a composition bias toward polar residues. Basic and acidic residues predominate over residues 210-223 (GDPKALRPKPTLEK). A compositionally biased stretch (polar residues) spans 234 to 247 (GLTSPEPQLPNSPT). Residues 253 to 263 (KEGKEPQKRAS) are compositionally biased toward basic and acidic residues. 5 C2H2-type zinc fingers span residues 356–378 (FACE…TRSH), 384–406 (FQCN…QRTH), 412–434 (YTCD…KRSH), 440–462 (FECK…QRIH), and 468–490 (HKCS…QKTH).

The protein localises to the nucleus. May be involved in transcriptional regulation. This Homo sapiens (Human) protein is Zinc finger and SCAN domain-containing protein 5C.